We begin with the raw amino-acid sequence, 154 residues long: Probable transport accessory protein MmpS4 (154 aa).

2 helical membrane passes run 19–39 (IWIP…VYRV) and 97–117 (QLPW…NLVA).

It belongs to the MmpS family.

It localises to the cell membrane. This chain is Probable transport accessory protein MmpS4, found in Mycobacterium leprae (strain TN).